Consider the following 122-residue polypeptide: Small ribosomal subunit protein uS13 (122 aa).

A disordered region spans residues 94 to 122; the sequence is GLPVRGQVTQKNARTRKGPRKTVAGKKGK. A compositionally biased stretch (basic residues) spans 106–122; sequence ARTRKGPRKTVAGKKGK.

It belongs to the universal ribosomal protein uS13 family. In terms of assembly, part of the 30S ribosomal subunit. Forms a loose heterodimer with protein S19. Forms two bridges to the 50S subunit in the 70S ribosome.

Its function is as follows. Located at the top of the head of the 30S subunit, it contacts several helices of the 16S rRNA. In the 70S ribosome it contacts the 23S rRNA (bridge B1a) and protein L5 of the 50S subunit (bridge B1b), connecting the 2 subunits; these bridges are implicated in subunit movement. Contacts the tRNAs in the A and P-sites. This chain is Small ribosomal subunit protein uS13, found in Mycoplasma mobile (strain ATCC 43663 / 163K / NCTC 11711) (Mesomycoplasma mobile).